Consider the following 37-residue polypeptide: Cytochrome b6-f complex subunit 5 (37 aa).

The chain crosses the membrane as a helical span at residues 5–25; sequence LLCGIVLGLIPITLAGLFMAA.

The protein belongs to the PetG family. As to quaternary structure, the 4 large subunits of the cytochrome b6-f complex are cytochrome b6, subunit IV (17 kDa polypeptide, PetD), cytochrome f and the Rieske protein, while the 4 small subunits are PetG, PetL, PetM and PetN. The complex functions as a dimer.

Its subcellular location is the cellular thylakoid membrane. Component of the cytochrome b6-f complex, which mediates electron transfer between photosystem II (PSII) and photosystem I (PSI), cyclic electron flow around PSI, and state transitions. PetG is required for either the stability or assembly of the cytochrome b6-f complex. This is Cytochrome b6-f complex subunit 5 from Synechococcus elongatus (strain ATCC 33912 / PCC 7942 / FACHB-805) (Anacystis nidulans R2).